Consider the following 406-residue polypeptide: Ribulose bisphosphate carboxylase large chain (406 aa).

Substrate-binding residues include asparagine 101 and threonine 151. The Proton acceptor role is filled by lysine 153. Lysine 155 is a binding site for substrate. Positions 179, 181, and 182 each coordinate Mg(2+). Lysine 179 carries the N6-carboxylysine modification. Histidine 272 serves as the catalytic Proton acceptor. Substrate-binding residues include arginine 273, histidine 305, and serine 357.

It belongs to the RuBisCO large chain family. Type I subfamily. As to quaternary structure, heterohexadecamer of 8 large chains and 8 small chains; disulfide-linked. The disulfide link is formed within the large subunit homodimers. It depends on Mg(2+) as a cofactor. The disulfide bond which can form in the large chain dimeric partners within the hexadecamer appears to be associated with oxidative stress and protein turnover.

The protein resides in the plastid. It is found in the chloroplast. It carries out the reaction 2 (2R)-3-phosphoglycerate + 2 H(+) = D-ribulose 1,5-bisphosphate + CO2 + H2O. It catalyses the reaction D-ribulose 1,5-bisphosphate + O2 = 2-phosphoglycolate + (2R)-3-phosphoglycerate + 2 H(+). Its function is as follows. RuBisCO catalyzes two reactions: the carboxylation of D-ribulose 1,5-bisphosphate, the primary event in carbon dioxide fixation, as well as the oxidative fragmentation of the pentose substrate in the photorespiration process. Both reactions occur simultaneously and in competition at the same active site. In Trichomanes striatum (Fern), this protein is Ribulose bisphosphate carboxylase large chain (rbcL).